The sequence spans 33 residues: Photosystem II reaction center protein Psb30 (33 aa).

The chain crosses the membrane as a helical span at residues 5 to 25 (LIVQLGSLALITVAGPAIIVL).

This sequence belongs to the Psb30/Ycf12 family. PSII is composed of 1 copy each of membrane proteins PsbA, PsbB, PsbC, PsbD, PsbE, PsbF, PsbH, PsbI, PsbJ, PsbK, PsbL, PsbM, PsbT, PsbY, PsbZ, Psb30/Ycf12, peripheral proteins of the oxygen-evolving complex and a large number of cofactors. It forms dimeric complexes.

The protein localises to the plastid. It localises to the chloroplast thylakoid membrane. Functionally, a core subunit of photosystem II (PSII), probably helps stabilize the reaction center. The sequence is that of Photosystem II reaction center protein Psb30 from Euglena stellata.